Reading from the N-terminus, the 173-residue chain is Large ribosomal subunit protein uL10 (173 aa).

Belongs to the universal ribosomal protein uL10 family. Part of the ribosomal stalk of the 50S ribosomal subunit. The N-terminus interacts with L11 and the large rRNA to form the base of the stalk. The C-terminus forms an elongated spine to which L12 dimers bind in a sequential fashion forming a multimeric L10(L12)X complex.

Functionally, forms part of the ribosomal stalk, playing a central role in the interaction of the ribosome with GTP-bound translation factors. This Geobacter sp. (strain M21) protein is Large ribosomal subunit protein uL10.